We begin with the raw amino-acid sequence, 152 residues long: Nucleoside diphosphate kinase (152 aa).

K11, F59, R87, T93, R104, and N114 together coordinate ATP. The Pros-phosphohistidine intermediate role is filled by H117.

The protein belongs to the NDK family. Homotetramer. Mg(2+) serves as cofactor.

Its subcellular location is the cytoplasm. It carries out the reaction a 2'-deoxyribonucleoside 5'-diphosphate + ATP = a 2'-deoxyribonucleoside 5'-triphosphate + ADP. The catalysed reaction is a ribonucleoside 5'-diphosphate + ATP = a ribonucleoside 5'-triphosphate + ADP. Its function is as follows. Major role in the synthesis of nucleoside triphosphates other than ATP. The ATP gamma phosphate is transferred to the NDP beta phosphate via a ping-pong mechanism, using a phosphorylated active-site intermediate. This is Nucleoside diphosphate kinase from Prochlorococcus marinus (strain MIT 9215).